The primary structure comprises 251 residues: Hydroxyacylglutathione hydrolase (251 aa).

Positions 53, 55, 57, 58, 110, 127, and 165 each coordinate Zn(2+).

This sequence belongs to the metallo-beta-lactamase superfamily. Glyoxalase II family. In terms of assembly, monomer. Zn(2+) serves as cofactor.

The catalysed reaction is an S-(2-hydroxyacyl)glutathione + H2O = a 2-hydroxy carboxylate + glutathione + H(+). It participates in secondary metabolite metabolism; methylglyoxal degradation; (R)-lactate from methylglyoxal: step 2/2. Its function is as follows. Thiolesterase that catalyzes the hydrolysis of S-D-lactoyl-glutathione to form glutathione and D-lactic acid. The polypeptide is Hydroxyacylglutathione hydrolase (Yersinia enterocolitica serotype O:8 / biotype 1B (strain NCTC 13174 / 8081)).